The sequence spans 111 residues: MAEQKTGQKADQKIRIRLKAFDHRLIDRSASEIVETAKRTGAQVRGPIPLPTKIERYTILVSPHADKDARDQYETRTHKRVLDIIDPNDKTVDALMKLELAAGVDVQIKLT.

This sequence belongs to the universal ribosomal protein uS10 family. As to quaternary structure, part of the 30S ribosomal subunit.

In terms of biological role, involved in the binding of tRNA to the ribosomes. The chain is Small ribosomal subunit protein uS10 from Xanthomonas euvesicatoria pv. vesicatoria (strain 85-10) (Xanthomonas campestris pv. vesicatoria).